A 536-amino-acid chain; its full sequence is CTP synthase (536 aa).

The segment at 1-267 (MTKFIFVTGG…DDIVIKRLQL (267 aa)) is amidoligase domain. S13 lines the CTP pocket. S13 is a UTP binding site. An ATP-binding site is contributed by 14-19 (SLGKGI). An L-glutamine-binding site is contributed by Y54. D71 is an ATP binding site. Residues D71 and E141 each coordinate Mg(2+). CTP-binding positions include 148–150 (DIE), 188–193 (KTKPTQ), and K224. UTP contacts are provided by residues 188–193 (KTKPTQ) and K224. 240–242 (RDA) provides a ligand contact to ATP. A Glutamine amidotransferase type-1 domain is found at 293–535 (TIGLVGKYVS…IEASLKYQQN (243 aa)). G355 is an L-glutamine binding site. C382 functions as the Nucleophile; for glutamine hydrolysis in the catalytic mechanism. Residues 383-386 (LGMQ), E406, and R463 each bind L-glutamine. Residues H508 and E510 contribute to the active site.

The protein belongs to the CTP synthase family. Homotetramer.

It carries out the reaction UTP + L-glutamine + ATP + H2O = CTP + L-glutamate + ADP + phosphate + 2 H(+). The catalysed reaction is L-glutamine + H2O = L-glutamate + NH4(+). The enzyme catalyses UTP + NH4(+) + ATP = CTP + ADP + phosphate + 2 H(+). The protein operates within pyrimidine metabolism; CTP biosynthesis via de novo pathway; CTP from UDP: step 2/2. Allosterically activated by GTP, when glutamine is the substrate; GTP has no effect on the reaction when ammonia is the substrate. The allosteric effector GTP functions by stabilizing the protein conformation that binds the tetrahedral intermediate(s) formed during glutamine hydrolysis. Inhibited by the product CTP, via allosteric rather than competitive inhibition. In terms of biological role, catalyzes the ATP-dependent amination of UTP to CTP with either L-glutamine or ammonia as the source of nitrogen. Regulates intracellular CTP levels through interactions with the four ribonucleotide triphosphates. This is CTP synthase from Staphylococcus aureus (strain NCTC 8325 / PS 47).